We begin with the raw amino-acid sequence, 360 residues long: Epoxide hydrolase 3 (360 aa).

A helical transmembrane segment spans residues 22–42; that stretch reads AFMWSLVFSVALVAAAVYGCI. The active-site Nucleophile is Asp-173. Tyr-281 acts as the Proton donor in catalysis. The Proton acceptor role is filled by His-337.

The protein belongs to the AB hydrolase superfamily. Epoxide hydrolase family.

It is found in the microsome membrane. It catalyses the reaction an epoxide + H2O = an ethanediol. The enzyme catalyses 9,10-epoxyoctadecanoate + H2O = 9,10-dihydroxyoctadecanoate. It carries out the reaction 9,10-epoxy-(12Z)-octadecenoate + H2O = 9,10-dihydroxy-(12Z)-octadecenoate. The catalysed reaction is 8,9-epoxy-(5Z,11Z,14Z)-eicosatrienoate + H2O = 8,9-dihydroxy-(5Z,11Z,14Z)-eicosatrienoate. It catalyses the reaction 11,12-epoxy-(5Z,8Z,14Z)-eicosatrienoate + H2O = 11,12-dihydroxy-(5Z,8Z,14Z)-eicosatrienoate. The enzyme catalyses 14,15-epoxy-(5Z,8Z,11Z)-eicosatrienoate + H2O = 14,15-dihydroxy-(5Z,8Z,11Z)-eicosatrienoate. With respect to regulation, inhibited by 1-(1-acetylpiperidin-4-yl)-3-(4-(trifl uoromethoxy)phenyl)urea (TPAU), 1-cyclohexyl-3-dodecylurea (CDU), 12-(3-adamantan-1-yl-ureido)-dodecanoic acid (AUDA), 1-((3S, 5S, 7S)-adamantan-1-yl)-3-(5-(2-(2-ethoxyethoxy) ethoxy)pentyl)urea (AEPU) and to a lesser extent by 8-(3-((3S, 5S, 7S)-adamantan-1-yl)ureido) octanoic acid (AUOA). Functionally, catalyzes the hydrolysis of epoxide-containing fatty acids. Active in vitro against epoxyeicosatrienoic acids (EETs) including 8,9-EET, 9,10-EET, 11,12-EET and 14,15-EET and leukotoxin. The polypeptide is Epoxide hydrolase 3 (EPHX3) (Homo sapiens (Human)).